The sequence spans 137 residues: Methylglyoxal synthase (137 aa).

An MGS-like domain is found at Met-1 to Ile-137. Residues His-8, Lys-12, Thr-34–Thr-37, and Ser-54–Gly-55 contribute to the substrate site. Asp-60 acts as the Proton donor/acceptor in catalysis. A substrate-binding site is contributed by His-87.

It belongs to the methylglyoxal synthase family.

The enzyme catalyses dihydroxyacetone phosphate = methylglyoxal + phosphate. In terms of biological role, catalyzes the formation of methylglyoxal from dihydroxyacetone phosphate. This chain is Methylglyoxal synthase, found in Clostridioides difficile (strain 630) (Peptoclostridium difficile).